Consider the following 466-residue polypeptide: Glucose-6-phosphate 1-dehydrogenase 1 (466 aa).

Residues Ser48, 88–89 (DV), and Lys141 contribute to the NADP(+) site. Substrate is bound by residues His171, Lys175, Glu209, and Asp228. His233 acts as the Proton acceptor in catalysis. Residues Lys319 and Lys324 each contribute to the substrate site.

This sequence belongs to the glucose-6-phosphate dehydrogenase family.

It catalyses the reaction D-glucose 6-phosphate + NADP(+) = 6-phospho-D-glucono-1,5-lactone + NADPH + H(+). The protein operates within carbohydrate degradation; pentose phosphate pathway; D-ribulose 5-phosphate from D-glucose 6-phosphate (oxidative stage): step 1/3. Catalyzes the oxidation of glucose 6-phosphate to 6-phosphogluconolactone. This chain is Glucose-6-phosphate 1-dehydrogenase 1, found in Mycobacterium tuberculosis (strain ATCC 25618 / H37Rv).